The chain runs to 438 residues: Acid phosphatase type 7 (438 aa).

Residues 1–26 form the signal peptide; the sequence is MHPLPGYWSCYCLLLLFSLGVQGSLG. Fe cation is bound by residues Asp141, Asp170, and Tyr173. Residue Asp170 participates in Zn(2+) binding. Asn205 contacts Zn(2+). The N-linked (GlcNAc...) asparagine glycan is linked to Asn211. Zn(2+)-binding residues include His286 and His333. His335 contributes to the Fe cation binding site. N-linked (GlcNAc...) asparagine glycans are attached at residues Asn350 and Asn404.

Belongs to the metallophosphoesterase superfamily. Purple acid phosphatase family. It depends on Fe cation as a cofactor. The cofactor is Zn(2+).

The protein localises to the secreted. The catalysed reaction is a phosphate monoester + H2O = an alcohol + phosphate. In Homo sapiens (Human), this protein is Acid phosphatase type 7.